The sequence spans 484 residues: MAKTLAEKVWDAHVVRKGDGAGANAQPDLLFIDLHLVHEVTSPQAFEGLRLAGRPLRRPDLTIATEDHNTPTLDIDKPIADLTSRTQIQTLRNNCAEFGVRLHSLGDAEQGIVHVVGPQLGLTQPGMTVVCGDSHTSTHGAFGALAMGIGTSEVEHVMATQTLSLKPFKTMAINVEGTLRPGVTAKDIILAVIAKIGTGGGQGYVLEYRGSAIRALSMDARMTICNMSIEAGARAGMVAPDETTYAYMQGRPHAPEGADWDAAVEYWNTLKTDDDATFDVEVDLDADTLEPFVTWGTNPGQGVSLSQAVPSPEDFGDENAKAAAERALQYMGLEAGTPMKDIRVDTVFLGSCTNSRIEDLRAAADIIRGREKDPKVRMLVVPGSARVRLEAEAEGLDRVFKDFGAEWRFAGCSMCLGMNPDQLEPGERCASTSNRNFEGRQGKGGRTHLVSPVVAAATAVRGTLSSPSDLDPAPASAAIRTDAA.

Residues C352, C412, and C415 each contribute to the [4Fe-4S] cluster site. The tract at residues 463 to 484 is disordered; the sequence is TLSSPSDLDPAPASAAIRTDAA. Residues 464-478 are compositionally biased toward low complexity; it reads LSSPSDLDPAPASAA.

It belongs to the aconitase/IPM isomerase family. LeuC type 1 subfamily. As to quaternary structure, heterodimer of LeuC and LeuD. It depends on [4Fe-4S] cluster as a cofactor.

The catalysed reaction is (2R,3S)-3-isopropylmalate = (2S)-2-isopropylmalate. It functions in the pathway amino-acid biosynthesis; L-leucine biosynthesis; L-leucine from 3-methyl-2-oxobutanoate: step 2/4. Catalyzes the isomerization between 2-isopropylmalate and 3-isopropylmalate, via the formation of 2-isopropylmaleate. This chain is 3-isopropylmalate dehydratase large subunit, found in Pseudarthrobacter chlorophenolicus (strain ATCC 700700 / DSM 12829 / CIP 107037 / JCM 12360 / KCTC 9906 / NCIMB 13794 / A6) (Arthrobacter chlorophenolicus).